Consider the following 443-residue polypeptide: MSTTDSIVSSQAKQSSWRKSDTTWTLGLFGTAIGAGVLFFPIRAGFGGLIPILLMLVLAYPIAFYCHRALARLCLSGSNPSGNITETVEEHFGKTGGVVITFLYFFAICPLLWIYGVTITNTFMTFWENQLQMPALNRGFVALFLLLLMAFVIWFGKDLMVKVMSYLVWPFIASLVLISLSLIPYWNSAVIDQVDLSNIALTGHDGILVTVWLGISIMVFSFNFSPIVSSFVVSKREEYEKEFGREFTERKCSQIISRASMLMVAVVMFFAFSCLFTLSPQNMADAKAQNIPVLSYLANHFASLSGTKSTFATVLEYGASIIALVAIFKSFFGHYLGTLEGLNGLVMKFGYKGDKTKVSMGKLNTISMIFIMGSTWVVAYANPNILDLIEAMGAPIIASLLCLLPMYAIRKAPSLAKYRGRLDNVFVTLIGLLTILNIVYKLF.

11 consecutive transmembrane segments (helical) span residues 22-42 (TTWT…FFPI), 44-64 (AGFG…PIAF), 97-117 (GVVI…IYGV), 140-160 (FVAL…KDLM), 163-183 (VMSY…LSLI), 207-227 (ILVT…FSPI), 259-279 (ASML…FTLS), 319-339 (ASII…LGTL), 366-386 (ISMI…PNIL), 389-409 (IEAM…MYAI), and 423-443 (DNVF…YKLF).

This sequence belongs to the amino acid/polyamine transporter 2 family. SdaC/TdcC subfamily.

The protein localises to the cell inner membrane. It catalyses the reaction L-threonine(in) + H(+)(in) = L-threonine(out) + H(+)(out). The enzyme catalyses L-serine(in) + H(+)(in) = L-serine(out) + H(+)(out). Involved in the import of threonine and serine into the cell, with the concomitant import of a proton (symport system). The polypeptide is Threonine/serine transporter TdcC (Salmonella paratyphi B (strain ATCC BAA-1250 / SPB7)).